We begin with the raw amino-acid sequence, 667 residues long: Acetolactate synthase 1, chloroplastic (667 aa).

Low complexity predominate over residues 1 to 35 (MAAAAPSPSSSAFSKTLSPSSSTSSTLLPRSTFPF). The tract at residues 1 to 45 (MAAAAPSPSSSAFSKTLSPSSSTSSTLLPRSTFPFPHHPHKTTPP) is disordered. A chloroplast-targeting transit peptide spans 1–94 (MAAAAPSPSS…VSRFAPDEPR (94 aa)). Thiamine diphosphate is bound at residue glutamate 141. Cysteines 161 and 307 form a disulfide. FAD is bound by residues arginine 243, 349–370 (HGTVYANYAVDSSDLLLAFGVR), and 392–411 (DIDSAEIGKNKQPHVSICAD). Residues 484–564 (QHQMWAAQYY…VKIMLLNNQH (81 aa)) form a thiamine pyrophosphate binding region. Residues aspartate 535 and asparagine 562 each contribute to the Mg(2+) site.

This sequence belongs to the TPP enzyme family. Mg(2+) serves as cofactor. Thiamine diphosphate is required as a cofactor.

It is found in the plastid. Its subcellular location is the chloroplast. It carries out the reaction 2 pyruvate + H(+) = (2S)-2-acetolactate + CO2. It functions in the pathway amino-acid biosynthesis; L-isoleucine biosynthesis; L-isoleucine from 2-oxobutanoate: step 1/4. Its pathway is amino-acid biosynthesis; L-valine biosynthesis; L-valine from pyruvate: step 1/4. In Nicotiana tabacum (Common tobacco), this protein is Acetolactate synthase 1, chloroplastic (ALS SURA).